A 262-amino-acid polypeptide reads, in one-letter code: 5'-nucleotidase SurE (262 aa).

Residues Asp-11, Asp-12, Ser-43, and Asn-101 each contribute to the a divalent metal cation site. Over residues 220-229 (SAGDGPKEWP) the composition is skewed to basic and acidic residues. Residues 220-246 (SAGDGPKEWPSDVSQIETNSPSLTPIQ) are disordered. The span at 231–244 (DVSQIETNSPSLTP) shows a compositional bias: polar residues.

The protein belongs to the SurE nucleotidase family. A divalent metal cation serves as cofactor.

The protein resides in the cytoplasm. It catalyses the reaction a ribonucleoside 5'-phosphate + H2O = a ribonucleoside + phosphate. Functionally, nucleotidase that shows phosphatase activity on nucleoside 5'-monophosphates. In Prochlorococcus marinus (strain SARG / CCMP1375 / SS120), this protein is 5'-nucleotidase SurE.